We begin with the raw amino-acid sequence, 293 residues long: Proline iminopeptidase (293 aa).

The AB hydrolase-1 domain occupies 28-277; it reads PLVLLHGGPG…NCGHMSFVEK (250 aa). The Nucleophile role is filled by S105. The active site involves D244. The active-site Proton donor is H271.

The protein belongs to the peptidase S33 family.

The protein resides in the cell envelope. It carries out the reaction Release of N-terminal proline from a peptide.. Its function is as follows. Releases the N-terminal proline from various substrates. The protein is Proline iminopeptidase of Lactobacillus crispatus (strain ST1).